The chain runs to 506 residues: Alpha-1,3/1,6-mannosyltransferase alg2 (506 aa).

Helical transmembrane passes span 82 to 104 (SIFG…MILL) and 118 to 138 (LSTC…YCHF). N-linked (GlcNAc...) asparagine glycosylation is present at N299. Helical transmembrane passes span 443-463 (LLAV…AATV) and 481-501 (LGFM…TVYA).

It belongs to the glycosyltransferase group 1 family. Glycosyltransferase 4 subfamily.

It is found in the endoplasmic reticulum membrane. It catalyses the reaction a beta-D-Man-(1-&gt;4)-beta-D-GlcNAc-(1-&gt;4)-alpha-D-GlcNAc-diphospho-di-trans,poly-cis-dolichol + GDP-alpha-D-mannose = an alpha-D-Man-(1-&gt;3)-beta-D-Man-(1-&gt;4)-beta-D-GlcNAc-(1-&gt;4)-alpha-D-GlcNAc-diphospho-di-trans,poly-cis-dolichol + GDP + H(+). The catalysed reaction is an alpha-D-Man-(1-&gt;3)-beta-D-Man-(1-&gt;4)-beta-D-GlcNAc-(1-&gt;4)-alpha-D-GlcNAc-diphospho-di-trans,poly-cis-dolichol + GDP-alpha-D-mannose = an alpha-D-Man-(1-&gt;3)-[alpha-D-Man-(1-&gt;6)]-beta-D-Man-(1-&gt;4)-beta-D-GlcNAc-(1-&gt;4)-alpha-D-GlcNAc-diphospho-di-trans,poly-cis-dolichol + GDP + H(+). The protein operates within protein modification; protein glycosylation. Functionally, mannosylates Man(2)GlcNAc(2)-dolichol diphosphate and Man(1)GlcNAc(2)-dolichol diphosphate to form Man(3)GlcNAc(2)-dolichol diphosphate. The chain is Alpha-1,3/1,6-mannosyltransferase alg2 (alg2) from Schizosaccharomyces pombe (strain 972 / ATCC 24843) (Fission yeast).